Consider the following 370-residue polypeptide: Dual-specificity RNA methyltransferase RlmN (370 aa).

The active-site Proton acceptor is the E93. One can recognise a Radical SAM core domain in the interval 99–337; that stretch reads EEGRGTLCVS…VTTVRKTRGD (239 aa). C106 and C343 are disulfide-bonded. Residues C113, C117, and C120 each contribute to the [4Fe-4S] cluster site. S-adenosyl-L-methionine contacts are provided by residues 167 to 168, S199, 221 to 223, and N300; these read GE and SLH. C343 serves as the catalytic S-methylcysteine intermediate.

The protein belongs to the radical SAM superfamily. RlmN family. It depends on [4Fe-4S] cluster as a cofactor.

It is found in the cytoplasm. The catalysed reaction is adenosine(2503) in 23S rRNA + 2 reduced [2Fe-2S]-[ferredoxin] + 2 S-adenosyl-L-methionine = 2-methyladenosine(2503) in 23S rRNA + 5'-deoxyadenosine + L-methionine + 2 oxidized [2Fe-2S]-[ferredoxin] + S-adenosyl-L-homocysteine. The enzyme catalyses adenosine(37) in tRNA + 2 reduced [2Fe-2S]-[ferredoxin] + 2 S-adenosyl-L-methionine = 2-methyladenosine(37) in tRNA + 5'-deoxyadenosine + L-methionine + 2 oxidized [2Fe-2S]-[ferredoxin] + S-adenosyl-L-homocysteine. Functionally, specifically methylates position 2 of adenine 2503 in 23S rRNA and position 2 of adenine 37 in tRNAs. m2A2503 modification seems to play a crucial role in the proofreading step occurring at the peptidyl transferase center and thus would serve to optimize ribosomal fidelity. The sequence is that of Dual-specificity RNA methyltransferase RlmN from Francisella tularensis subsp. holarctica (strain FTNF002-00 / FTA).